Consider the following 131-residue polypeptide: Small ribosomal subunit protein uS8 (131 aa).

Belongs to the universal ribosomal protein uS8 family. In terms of assembly, part of the 30S ribosomal subunit. Contacts proteins S5 and S12.

One of the primary rRNA binding proteins, it binds directly to 16S rRNA central domain where it helps coordinate assembly of the platform of the 30S subunit. The chain is Small ribosomal subunit protein uS8 from Solibacter usitatus (strain Ellin6076).